We begin with the raw amino-acid sequence, 352 residues long: Pejvakin (352 aa).

It belongs to the gasdermin family. In terms of assembly, interacts with MAP1LC3B; interaction is direct. Interacts with IQGAP1. Interacts with ROCK2. Interacts with TRIOBP. In terms of tissue distribution, in ear, it is detected in the organ of Corti and the spiral ganglion within the cochlea in the sensory areas of the vestibule (cristae ampullares of the semicircular ducts, and maculae of the saccule and utricle) and in the first 3 relays (cochlear nuclei, superior olivary complex and inferior colliculus) of the afferent auditory pathway. Detected in hair cells of the cochlea and vestibule but not in neurons. In the afferent auditory pathway, it is present in the cell bodies of neurons but not in fiber bundles such as the trapezoid body in the brainstem. Also detected in spiral ganglion cells, which form the auditory nerve and project to the cochlear nuclei in the brainstem. Also present in the cochlear nuclei, the superior olive and the inferior colliculus (at protein level). Expressed in all the adult organs tested: brain, eye, inner ear, heart, lung, kidney, liver, intestine, testis and weakly in skeletal muscle.

Its subcellular location is the peroxisome membrane. The protein localises to the cell projection. It is found in the cilium. Peroxisome-associated protein required to protect auditory hair cells against noise-induced damage. Acts by regulating noise-induced peroxisome proliferation in auditory hair cells and neurons, and promoting autophagic degradation of damaged peroxisomes (pexophagy). Noise overexposure increases reactive oxygen species (ROS) levels, causing oxidative damage to auditory hair cells and resulting in hearing loss. PJVK acts as a ROS sensor that recruits the autophagy machinery to trigger pexophagy of peroxisomes damaged by oxidative stress. In addition to pexophagy, also required to promote peroxisome proliferation in response to sound overstimulation. This chain is Pejvakin, found in Mus musculus (Mouse).